A 274-amino-acid polypeptide reads, in one-letter code: 2,3,4,5-tetrahydropyridine-2,6-dicarboxylate N-succinyltransferase (274 aa).

This sequence belongs to the transferase hexapeptide repeat family.

The protein resides in the cytoplasm. It catalyses the reaction (S)-2,3,4,5-tetrahydrodipicolinate + succinyl-CoA + H2O = (S)-2-succinylamino-6-oxoheptanedioate + CoA. The protein operates within amino-acid biosynthesis; L-lysine biosynthesis via DAP pathway; LL-2,6-diaminopimelate from (S)-tetrahydrodipicolinate (succinylase route): step 1/3. This Salmonella agona (strain SL483) protein is 2,3,4,5-tetrahydropyridine-2,6-dicarboxylate N-succinyltransferase.